We begin with the raw amino-acid sequence, 471 residues long: Protein hedgehog (471 aa).

Cys-85 carries the N-palmitoyl cysteine lipid modification. Positions 149, 150, 155, 185, 186, 189, and 191 each coordinate Ca(2+). Gly-257 carries Cholesterol glycine ester lipidation.

This sequence belongs to the hedgehog family. Interacts with shf. Interacts with ptc and CG5504/l(2)tid. In terms of processing, the C-terminal part of the hedgehog protein precursor displays an autoproteolysis activity that results in the cleavage of the full-length protein into two parts (N-product and C-product). In addition, the C-terminal part displays a cholesterol transferase activity that results by the covalent attachment of a cholesterol moiety to the C-terminal of the newly generated N-product. The N-product is the active species in both local and long-range signaling, whereas the C-product has no signaling activity. Cholesterylation is required for N-product targeting to lipid rafts and multimerization. Post-translationally, N-palmitoylation by Rasp of the hedgehog N-product, within the secretory pathway, is required for the embryonic and larval patterning activities of the hedgehog signal. In terms of tissue distribution, in embryos, expression starts at stage 5 as a few stripes at the anterior and posterior ends, this expands to 17 stripes during stages 8-11. Expression is also seen in CNS and some PNS cells until stage 13-14, and in foregut, hindgut and salivary glands. In larvae, expression is seen in the posterior compartment of the wing, leg and antennal imaginal disks. In adults, high level of expression in specific regions of the proventriculus and hindgut, with slightly lower levels of expression in the posterior midgut. Relatively low levels of expression in the anterior midgut region.

The protein resides in the nucleus. The protein localises to the cytoplasm. It is found in the cell membrane. The enzyme catalyses glycyl-L-cysteinyl-[protein] + cholesterol + H(+) = [protein]-C-terminal glycyl cholesterol ester + N-terminal L-cysteinyl-[protein]. In terms of biological role, the C-terminal part of the hedgehog protein precursor displays an autoproteolysis activity that results in the cleavage of the full-length protein into two parts (N-product and C-product). In addition, the C-terminal part displays a cholesterol transferase activity that results by the covalent attachment of a cholesterol moiety to the C-terminal of the newly generated N-product. Once cleaved, the C-product has no signaling activity and diffuses from the cell. Functionally, the dually lipidated hedgehog protein N-product is a morphogen which is essential for a variety of patterning events during development. Establishes the anterior-posterior axis of the embryonic segments and patterns the larval imaginal disks. Binds to the patched (ptc) receptor, which functions in association with smoothened (smo), to activate the transcription of target genes wingless (wg), decapentaplegic (dpp) and ptc. In the absence of hh, ptc represses the constitutive signaling activity of smo through fused (fu). Essential component of a signaling pathway which regulates the Duox-dependent gut immune response to bacterial uracil; required to activate Cad99C-dependent endosome formation, norpA-dependent Ca2+ mobilization and p38 MAPK, which are essential steps in the Duox-dependent production of reactive oxygen species (ROS) in response to intestinal bacterial infection. During photoreceptor differentiation, it up-regulates transcription of Ubr3, which in turn promotes the hh-signaling pathway by mediating the ubiquitination and degradation of cos. This Drosophila melanogaster (Fruit fly) protein is Protein hedgehog.